The primary structure comprises 111 residues: uncharacterized protein (111 aa).

2 helical membrane passes run 29-49 (LLNF…ATAV) and 52-72 (ACFA…YLLA).

The protein resides in the membrane. This is an uncharacterized protein from Saccharomyces cerevisiae (strain ATCC 204508 / S288c) (Baker's yeast).